The following is a 655-amino-acid chain: Protein movement modulator (655 aa).

The Extracellular portion of the chain corresponds to 1 to 54 (MEQPSILVKILHSIPHVNYTFRRVNDTFNPDSDVYLEPTNNKLQCQQKGIELQS). Residues asparagine 18 and asparagine 25 are each glycosylated (N-linked (GlcNAc...) asparagine). Residues 55–75 (LVILASIPAGLLIGSLLGLLL) traverse the membrane as a helical segment. Topologically, residues 76–95 (YLLTRCCDRRQRKPSAQRCQ) are cytoplasmic. A helical transmembrane segment spans residues 96-116 (SCSLVIITLMTCAAIGLGLYG). The Extracellular segment spans residues 117-231 (NDDFHNGLLQ…GEFYESIRWP (115 aa)). N-linked (GlcNAc...) asparagine glycosylation is found at asparagine 171, asparagine 188, and asparagine 211. A helical membrane pass occupies residues 232-252 (ATLAFLTVLLLLCTVLVIGVA). Over 253–258 (RRSRCT) the chain is Cytoplasmic. The helical transmembrane segment at 259 to 279 (LIFFSVSGLFCIIICWLLAGV) threads the bilayer. Topologically, residues 280-401 (YLASSVAAGD…ALRGLCGGGL (122 aa)) are extracellular. 2 N-linked (GlcNAc...) asparagine glycosylation sites follow: asparagine 326 and asparagine 372. The chain crosses the membrane as a helical span at residues 402-422 (LGLSLMMVAGLLTSFLLTILV). Over 423–655 (YADSHAWIYL…CKTLESNDFY (233 aa)) the chain is Cytoplasmic. The tract at residues 446 to 576 (APLFPASNAP…NNHYNNTQHR (131 aa)) is disordered. The span at 450-464 (PASNAPSASISPTAP) shows a compositional bias: low complexity. Positions 465-480 (LSTGTINRTLLHHQQA) are enriched in polar residues. Residues 482–509 (SGGGSGTLPGSGGGAGAGGGVGANGHNG) are compositionally biased toward gly residues. Composition is skewed to low complexity over residues 526-539 (SPSSQSSHTSSTAT) and 546-576 (SYHNSHQQHNNHLYSNHYSHSNNHYNNTQHR). Phosphoserine is present on residues serine 597 and serine 599.

The protein belongs to the tweety family.

It localises to the cell membrane. It catalyses the reaction chloride(in) = chloride(out). Its function is as follows. Probable large-conductance Ca(2+)-activated chloride channel. Modulator of embryonic movement. The protein is Protein movement modulator of Drosophila melanogaster (Fruit fly).